Consider the following 255-residue polypeptide: Hydroxyacylglutathione hydrolase (255 aa).

The Zn(2+) site is built by histidine 56, histidine 58, aspartate 60, histidine 61, histidine 114, aspartate 133, and histidine 171.

The protein belongs to the metallo-beta-lactamase superfamily. Glyoxalase II family. In terms of assembly, monomer. Zn(2+) serves as cofactor.

It carries out the reaction an S-(2-hydroxyacyl)glutathione + H2O = a 2-hydroxy carboxylate + glutathione + H(+). The protein operates within secondary metabolite metabolism; methylglyoxal degradation; (R)-lactate from methylglyoxal: step 2/2. Thiolesterase that catalyzes the hydrolysis of S-D-lactoyl-glutathione to form glutathione and D-lactic acid. The sequence is that of Hydroxyacylglutathione hydrolase from Mesorhizobium japonicum (strain LMG 29417 / CECT 9101 / MAFF 303099) (Mesorhizobium loti (strain MAFF 303099)).